A 445-amino-acid chain; its full sequence is Membrane protein insertase YidC (445 aa).

Transmembrane regions (helical) follow at residues 6-26, 248-268, 313-333, 352-372, and 388-408; these read VVAILLAILPIFLFAVEPIKV, FGWAIMLFTLIVRLILYPLYH, ASGCLMLLIQLPIFMLLWSVI, LSAGGFSNNWLFLVITIVASY, and GIIMSVIFPFLFVGLPSGLFL.

It belongs to the OXA1/ALB3/YidC family. Type 1 subfamily. As to quaternary structure, interacts with the Sec translocase complex via SecD. Specifically interacts with transmembrane segments of nascent integral membrane proteins during membrane integration.

Its subcellular location is the cell inner membrane. Functionally, required for the insertion and/or proper folding and/or complex formation of integral membrane proteins into the membrane. Involved in integration of membrane proteins that insert both dependently and independently of the Sec translocase complex, as well as at least some lipoproteins. Aids folding of multispanning membrane proteins. This Thermotoga maritima (strain ATCC 43589 / DSM 3109 / JCM 10099 / NBRC 100826 / MSB8) protein is Membrane protein insertase YidC.